The sequence spans 438 residues: UDP-N-acetylmuramoylalanine--D-glutamate ligase (438 aa).

Residue 112-118 (GSNGKST) participates in ATP binding.

This sequence belongs to the MurCDEF family.

It localises to the cytoplasm. The catalysed reaction is UDP-N-acetyl-alpha-D-muramoyl-L-alanine + D-glutamate + ATP = UDP-N-acetyl-alpha-D-muramoyl-L-alanyl-D-glutamate + ADP + phosphate + H(+). It functions in the pathway cell wall biogenesis; peptidoglycan biosynthesis. Functionally, cell wall formation. Catalyzes the addition of glutamate to the nucleotide precursor UDP-N-acetylmuramoyl-L-alanine (UMA). In Salmonella paratyphi A (strain ATCC 9150 / SARB42), this protein is UDP-N-acetylmuramoylalanine--D-glutamate ligase.